We begin with the raw amino-acid sequence, 204 residues long: N-(5'-phosphoribosyl)anthranilate isomerase (204 aa).

Belongs to the TrpF family.

The enzyme catalyses N-(5-phospho-beta-D-ribosyl)anthranilate = 1-(2-carboxyphenylamino)-1-deoxy-D-ribulose 5-phosphate. It participates in amino-acid biosynthesis; L-tryptophan biosynthesis; L-tryptophan from chorismate: step 3/5. This Pseudomonas fluorescens (strain Pf0-1) protein is N-(5'-phosphoribosyl)anthranilate isomerase.